The sequence spans 378 residues: S-adenosylmethionine synthase (378 aa).

An ATP-binding site is contributed by H15. Position 17 (D17) interacts with Mg(2+). K(+) is bound at residue E43. The L-methionine site is built by E56 and Q99. Positions 99–109 (QSPDINQGINR) are flexible loop. ATP-binding positions include 164–166 (DAK), 230–231 (RF), D239, 245–246 (RK), A262, and K266. Residue D239 coordinates L-methionine. K270 contacts L-methionine.

It belongs to the AdoMet synthase family. As to quaternary structure, homotetramer; dimer of dimers. It depends on Mg(2+) as a cofactor. The cofactor is K(+).

The protein resides in the cytoplasm. The catalysed reaction is L-methionine + ATP + H2O = S-adenosyl-L-methionine + phosphate + diphosphate. It participates in amino-acid biosynthesis; S-adenosyl-L-methionine biosynthesis; S-adenosyl-L-methionine from L-methionine: step 1/1. Its function is as follows. Catalyzes the formation of S-adenosylmethionine (AdoMet) from methionine and ATP. The overall synthetic reaction is composed of two sequential steps, AdoMet formation and the subsequent tripolyphosphate hydrolysis which occurs prior to release of AdoMet from the enzyme. The protein is S-adenosylmethionine synthase of Buchnera aphidicola subsp. Acyrthosiphon pisum (strain 5A).